A 447-amino-acid chain; its full sequence is Phospholipase A(1) LCAT3 (447 aa).

Catalysis depends on serine 177, which acts as the Acyl-ester intermediate. Catalysis depends on charge relay system residues aspartate 384 and histidine 409.

This sequence belongs to the AB hydrolase superfamily. Lipase family.

The protein localises to the microsome membrane. It carries out the reaction a 1,2-diacyl-sn-glycero-3-phosphocholine + H2O = a 2-acyl-sn-glycero-3-phosphocholine + a fatty acid + H(+). Hydrolyzes the sn-1 acylester bond of phospholipids. Phosphatidylcholine, phosphatidylethanolamine and phosphatidic acid can be used as substrates. Weak activity with lysophosphatidylcholine and no activity with tripalmitoylglycerol and cholesteryl oleate. Seems to have a preference for unsaturated fatty acids at the sn-1 position. This is Phospholipase A(1) LCAT3 (LCAT3) from Arabidopsis thaliana (Mouse-ear cress).